Reading from the N-terminus, the 395-residue chain is Acid ceramidase (395 aa).

The signal sequence occupies residues 1–21 (MLGRSRLALVLLAAAVSCAVA). Cys31 and Cys340 are oxidised to a cystine. The active-site Nucleophile is the Cys143. Asn173, Asn195, Asn259, Asn286, Asn342, and Asn348 each carry an N-linked (GlcNAc...) asparagine glycan. Residues Cys388 and Cys392 are joined by a disulfide bond.

It belongs to the acid ceramidase family. In terms of assembly, heterodimer; disulfide-linked. The heterodimer is composed of the disulfide-linked alpha and beta chains produced by autocatalytic cleavage of the precursor. N-glycosylated. In terms of processing, proteolytically cleaved into two chains alpha and beta that remain associated via a disulfide bond. Cleavage gives rise to a conformation change that activates the enzyme. The same catalytic Cys residue mediates the autoproteolytic cleavage and subsequent hydrolysis of lipid substrates. The beta chain may undergo an additional C-terminal processing.

It localises to the lysosome. The protein resides in the secreted. It carries out the reaction an N-acylsphing-4-enine + H2O = sphing-4-enine + a fatty acid. It catalyses the reaction N-dodecanoylsphing-4-enine + H2O = dodecanoate + sphing-4-enine. The enzyme catalyses N-tetradecanoylsphing-4-enine + H2O = tetradecanoate + sphing-4-enine. The catalysed reaction is N-hexadecanoylsphing-4-enine + H2O = sphing-4-enine + hexadecanoate. It carries out the reaction N-octadecanoylsphing-4-enine + H2O = sphing-4-enine + octadecanoate. It catalyses the reaction N-dodecanoyl-(4R)-hydroxysphinganine + H2O = (4R)-hydroxysphinganine + dodecanoate. The enzyme catalyses N-(dodecanoyl)-sphinganine + H2O = dodecanoate + sphinganine. The catalysed reaction is N-(acetyl)-sphing-4-enine + H2O = sphing-4-enine + acetate. It carries out the reaction N-(hexanoyl)sphing-4-enine + H2O = hexanoate + sphing-4-enine. It catalyses the reaction N-octanoylsphing-4-enine + H2O = octanoate + sphing-4-enine. The enzyme catalyses N-(9Z-octadecenoyl)-sphing-4-enine + H2O = sphing-4-enine + (9Z)-octadecenoate. The catalysed reaction is N-dodecanoylethanolamine + H2O = dodecanoate + ethanolamine. It functions in the pathway lipid metabolism; sphingolipid metabolism. Functionally, lysosomal ceramidase that hydrolyzes sphingolipid ceramides into sphingosine and free fatty acids at acidic pH. Ceramides, sphingosine, and its phosphorylated form sphingosine-1-phosphate are bioactive lipids that mediate cellular signaling pathways regulating several biological processes including cell proliferation, apoptosis and differentiation. Has a higher catalytic efficiency towards C12-ceramides versus other ceramides. Also catalyzes the reverse reaction allowing the synthesis of ceramides from fatty acids and sphingosine. For the reverse synthetic reaction, the natural sphingosine D-erythro isomer is more efficiently utilized as a substrate compared to D-erythro-dihydrosphingosine and D-erythro-phytosphingosine, while the fatty acids with chain lengths of 12 or 14 carbons are the most efficiently used. Also has an N-acylethanolamine hydrolase activity. By regulating the levels of ceramides, sphingosine and sphingosine-1-phosphate in the epidermis, mediates the calcium-induced differentiation of epidermal keratinocytes. Also indirectly regulates tumor necrosis factor/TNF-induced apoptosis. By regulating the intracellular balance between ceramides and sphingosine, in adrenocortical cells, probably also acts as a regulator of steroidogenesis. This is Acid ceramidase from Macaca fascicularis (Crab-eating macaque).